The primary structure comprises 169 residues: Nicotinamide-nucleotide adenylyltransferase (169 aa).

It belongs to the archaeal NMN adenylyltransferase family.

It localises to the cytoplasm. The enzyme catalyses beta-nicotinamide D-ribonucleotide + ATP + H(+) = diphosphate + NAD(+). The protein operates within cofactor biosynthesis; NAD(+) biosynthesis; NAD(+) from nicotinamide D-ribonucleotide: step 1/1. This Picrophilus torridus (strain ATCC 700027 / DSM 9790 / JCM 10055 / NBRC 100828 / KAW 2/3) protein is Nicotinamide-nucleotide adenylyltransferase.